Consider the following 376-residue polypeptide: TraB domain-containing protein (376 aa).

Met-1 bears the N-acetylmethionine mark. The disordered stretch occupies residues 1–34 (MDGEEQQPPHEANVEPVVPSEASEPVPRVLSGDP). Over residues 14 to 27 (VEPVVPSEASEPVP) the composition is skewed to low complexity. Thr-65 bears the Phosphothreonine mark.

The polypeptide is TraB domain-containing protein (TRABD) (Homo sapiens (Human)).